Reading from the N-terminus, the 786-residue chain is Phenylalanine--tRNA ligase beta subunit (786 aa).

The tRNA-binding domain maps to 39 to 150 (LRAPDRVVVG…GELKLGKPLH (112 aa)). Positions 397–474 (YKPATITVDL…RLLGIDTILA (78 aa)) constitute a B5 domain. Residues aspartate 452, aspartate 458, glutamate 461, and glutamate 462 each coordinate Mg(2+). The 94-residue stretch at 693 to 786 (SKFPKLQRDL…LNHRFGAKLR (94 aa)) folds into the FDX-ACB domain.

It belongs to the phenylalanyl-tRNA synthetase beta subunit family. Type 1 subfamily. As to quaternary structure, tetramer of two alpha and two beta subunits. Requires Mg(2+) as cofactor.

Its subcellular location is the cytoplasm. The enzyme catalyses tRNA(Phe) + L-phenylalanine + ATP = L-phenylalanyl-tRNA(Phe) + AMP + diphosphate + H(+). In Wolinella succinogenes (strain ATCC 29543 / DSM 1740 / CCUG 13145 / JCM 31913 / LMG 7466 / NCTC 11488 / FDC 602W) (Vibrio succinogenes), this protein is Phenylalanine--tRNA ligase beta subunit.